The chain runs to 192 residues: MYQDLIRNELNEAAETLANFLKDEANIHAIQRAAVLLADSFKAGGKVISCGNGGSHCDAMHFAEELTGRYRENRPGYPAIAISDVSHISCVGNDFGYDHIFSRYVEAVGREGDVLLGISTSGNSANVAKAIEAAREKGMKVITLTGKDGGKMAGSADIEIRVPHFGYADRVQEIHIKVIHILIQLIEKEMVK.

Positions 37-192 (LADSFKAGGK…IQLIEKEMVK (156 aa)) constitute an SIS domain. A substrate-binding site is contributed by 52–54 (NGG). His61 and Glu65 together coordinate Zn(2+). Residues Glu65, 93-94 (ND), 119-121 (STS), Ser124, and Gln172 contribute to the substrate site. Gln172 and His180 together coordinate Zn(2+).

It belongs to the SIS family. GmhA subfamily. In terms of assembly, homotetramer. Zn(2+) serves as cofactor.

Its subcellular location is the cytoplasm. The enzyme catalyses 2 D-sedoheptulose 7-phosphate = D-glycero-alpha-D-manno-heptose 7-phosphate + D-glycero-beta-D-manno-heptose 7-phosphate. It functions in the pathway carbohydrate biosynthesis; D-glycero-D-manno-heptose 7-phosphate biosynthesis; D-glycero-alpha-D-manno-heptose 7-phosphate and D-glycero-beta-D-manno-heptose 7-phosphate from sedoheptulose 7-phosphate: step 1/1. Its function is as follows. Catalyzes the isomerization of sedoheptulose 7-phosphate in D-glycero-D-manno-heptose 7-phosphate. The chain is Phosphoheptose isomerase from Enterobacter sp. (strain 638).